Here is a 116-residue protein sequence, read N- to C-terminus: Spermadhesin Z13 (116 aa).

Intrachain disulfides connect Cys14–Cys35 and Cys58–Cys79. One can recognise a CUB domain in the interval 14–115 (CGDLYGEEYG…PDFFLIFRRV (102 aa)).

Belongs to the spermadhesin family. In terms of assembly, homodimer; disulfide-linked. Seminal plasma.

It localises to the secreted. May be involved in the fertilization process. The chain is Spermadhesin Z13 from Bos taurus (Bovine).